The sequence spans 536 residues: Glycine-rich extracellular protein 1 (536 aa).

The N-terminal stretch at 1–22 (MGAWAFPAALFLLCLTSESLQG) is a signal peptide. 3 disordered regions span residues 111-134 (AQNGFGPGFGGGGKPQKPGPTTQN), 306-336 (GAGEGMKPQKPGLRGTLKPQKSGHGHENGPW), and 500-536 (GDEYAEARSQPGGPDVKRGSNGQLGNGYGGRCPLGKC). Residues 115 to 124 (FGPGFGGGGK) are compositionally biased toward gly residues. Residues 521–536 (GQLGNGYGGRCPLGKC) are compositionally biased toward gly residues.

This Homo sapiens (Human) protein is Glycine-rich extracellular protein 1.